The following is a 225-amino-acid chain: MGENIEISTKVIENQEIRFRCYKADSTKIAVLAHPYAFLGGSVDDINIIALSKKINSKGFTVYVLDATTRRSALLSGKHDTMIFTLFVKYITSLNHPEYLLLGGYSYGARISMHKSITLAIDKRISHVSYLFLAPYLGLGSSILSWSWGLGFESFSTDSKVLFVWPDNDEFTREGTFETTLAKLKNRCPETTPLKLTDCSHMLSPSSRKILLETVDKWLASALNV.

This is an uncharacterized protein from Schizosaccharomyces pombe (strain 972 / ATCC 24843) (Fission yeast).